The chain runs to 706 residues: Translation factor GUF1 homolog, mitochondrial (706 aa).

The tr-type G domain maps to 89–272; it reads SRIRNFSIIA…SIVKNVPPPQ (184 aa). GTP-binding positions include 98–105, 165–169, and 219–222; these read AHIDHGKS, DTPGH, and NKID.

This sequence belongs to the TRAFAC class translation factor GTPase superfamily. Classic translation factor GTPase family. LepA subfamily.

It is found in the mitochondrion inner membrane. The enzyme catalyses GTP + H2O = GDP + phosphate + H(+). Promotes mitochondrial protein synthesis. May act as a fidelity factor of the translation reaction, by catalyzing a one-codon backward translocation of tRNAs on improperly translocated ribosomes. Binds to mitochondrial ribosomes in a GTP-dependent manner. The chain is Translation factor GUF1 homolog, mitochondrial from Thalassiosira pseudonana (Marine diatom).